The primary structure comprises 391 residues: Autotransporter heptosyltransferase Aah (391 aa).

ADP-D-glycero-beta-D-manno-heptose is bound by residues Thr-101, Leu-102, and Gly-103. Asp-104 functions as the Proton acceptor in the catalytic mechanism. ADP-D-glycero-beta-D-manno-heptose contacts are provided by Gln-218, Thr-220, Lys-224, Arg-251, Leu-275, Gly-296, and Glu-320. Positions 333, 336, 352, and 364 each coordinate Fe(3+).

The protein belongs to the glycosyltransferase 9 family. In terms of assembly, homododecamer composed of 6 homodimers forming a ring. Fe(3+) is required as a cofactor.

It is found in the cytoplasm. It catalyses the reaction ADP-D-glycero-beta-D-manno-heptose + L-seryl-[protein] = O-(D-glycero-alpha-D-manno-heptosyl)-L-seryl-[protein] + ADP + H(+). It carries out the reaction ADP-L-glycero-beta-D-manno-heptose + L-seryl-[protein] = O-(L-glycero-alpha-D-manno-heptosyl)-L-seryl-[protein] + ADP + H(+). Glycosylates autotransporter AIDA-I. Catalyzes the addition of both L, D-heptose and D, D-heptose sugars. Probably by glycosylating AIDA-I, involved in bacteria adhesion to host mammalian cells. This Escherichia coli protein is Autotransporter heptosyltransferase Aah.